A 271-amino-acid chain; its full sequence is 3-methyl-2-oxobutanoate hydroxymethyltransferase (271 aa).

Residues aspartate 53 and aspartate 92 each coordinate Mg(2+). 3-methyl-2-oxobutanoate-binding positions include 53 to 54 (DS), aspartate 92, and lysine 120. Glutamate 122 lines the Mg(2+) pocket. Residue glutamate 189 is the Proton acceptor of the active site.

This sequence belongs to the PanB family. In terms of assembly, homodecamer; pentamer of dimers. Requires Mg(2+) as cofactor.

It localises to the cytoplasm. It catalyses the reaction 3-methyl-2-oxobutanoate + (6R)-5,10-methylene-5,6,7,8-tetrahydrofolate + H2O = 2-dehydropantoate + (6S)-5,6,7,8-tetrahydrofolate. It functions in the pathway cofactor biosynthesis; (R)-pantothenate biosynthesis; (R)-pantoate from 3-methyl-2-oxobutanoate: step 1/2. Its function is as follows. Catalyzes the reversible reaction in which hydroxymethyl group from 5,10-methylenetetrahydrofolate is transferred onto alpha-ketoisovalerate to form ketopantoate. This is 3-methyl-2-oxobutanoate hydroxymethyltransferase from Paraburkholderia phymatum (strain DSM 17167 / CIP 108236 / LMG 21445 / STM815) (Burkholderia phymatum).